Consider the following 512-residue polypeptide: MKLFVLIALFGLGFAQHNPNTRDGRTAIVHLFEWRWADIAAECERFLGPKGFAGVQISPPNEHILVSSPWRPWWQRYQPISYNLCSRSGGENELRDMITRCNNVGVNVYVDAVINHMCGAGGGEGTHSSCGSWFNANNKDFPSVPYSNLDFNDGKCKTGSGNIENYGDPYQVRDCRLVGLLDLALEKDYVRGKVADFMNKLIDMGVAGFRVDACKHMWPGDLDNVYRRLNNLNTKWFPGGSRPFIFQEVIDLGGEPITTGEYVGLGRVTEFKYGARLGELFRKWNGQKLSYTKNWGEGWGFMADGNAVVFTDNHDNQRGHGAGGASILTFWDPRLYKMAVGYMLAHPYGFTRVMSSYSWDRNFVNGKDENDWIGPPSNGDGSTKPVPINPDQTCGDGWVCEHRWRQIMNMVQFRNVVNGQPHANWWDNGNNQVAFGRGNRGFIVFNNDDWALDVTLNTGLPGGTYCDVISGNKDGGSCTGKQITVGGDGRAHFYINNSEEDPFIAIHADSKL.

The N-terminal stretch at 1 to 15 (MKLFVLIALFGLGFA) is a signal peptide. Intrachain disulfides connect Cys-43–Cys-101, Cys-85–Cys-130, and Cys-156–Cys-175. Ca(2+) contacts are provided by Asn-115, Arg-173, and Asp-182. Residue Arg-210 coordinates chloride. Asp-212 serves as the catalytic Nucleophile. His-216 lines the Ca(2+) pocket. Glu-248 (proton donor) is an active-site residue. Chloride is bound at residue Arg-352. 2 cysteine pairs are disulfide-bonded: Cys-394/Cys-400 and Cys-466/Cys-478. N-linked (GlcNAc...) asparagine glycosylation is present at Asn-496.

It belongs to the glycosyl hydrolase 13 family. Requires Ca(2+) as cofactor. Chloride is required as a cofactor.

The protein resides in the secreted. It carries out the reaction Endohydrolysis of (1-&gt;4)-alpha-D-glucosidic linkages in polysaccharides containing three or more (1-&gt;4)-alpha-linked D-glucose units.. Its function is as follows. Catalyzes the hydrolysis of alpha-1,4 glycosidic linkages in starch, glycogen and similar oligosaccharides. This Oryzias latipes (Japanese rice fish) protein is Alpha-amylase.